The chain runs to 317 residues: Aspartate carbamoyltransferase catalytic subunit (317 aa).

Positions 65 and 66 each coordinate carbamoyl phosphate. Lys93 provides a ligand contact to L-aspartate. Positions 115, 145, and 148 each coordinate carbamoyl phosphate. The L-aspartate site is built by Arg178 and Arg233. Carbamoyl phosphate-binding residues include Gly274 and Pro275.

It belongs to the aspartate/ornithine carbamoyltransferase superfamily. ATCase family. Heterododecamer (2C3:3R2) of six catalytic PyrB chains organized as two trimers (C3), and six regulatory PyrI chains organized as three dimers (R2).

It catalyses the reaction carbamoyl phosphate + L-aspartate = N-carbamoyl-L-aspartate + phosphate + H(+). The protein operates within pyrimidine metabolism; UMP biosynthesis via de novo pathway; (S)-dihydroorotate from bicarbonate: step 2/3. In terms of biological role, catalyzes the condensation of carbamoyl phosphate and aspartate to form carbamoyl aspartate and inorganic phosphate, the committed step in the de novo pyrimidine nucleotide biosynthesis pathway. The chain is Aspartate carbamoyltransferase catalytic subunit from Methylobacillus flagellatus (strain ATCC 51484 / DSM 6875 / VKM B-1610 / KT).